The following is a 338-amino-acid chain: Ribosomal RNA small subunit methyltransferase H (338 aa).

S-adenosyl-L-methionine contacts are provided by residues 46–48, D63, F90, D106, and Q113; that span reads GGY.

The protein belongs to the methyltransferase superfamily. RsmH family.

The protein localises to the cytoplasm. The catalysed reaction is cytidine(1402) in 16S rRNA + S-adenosyl-L-methionine = N(4)-methylcytidine(1402) in 16S rRNA + S-adenosyl-L-homocysteine + H(+). Functionally, specifically methylates the N4 position of cytidine in position 1402 (C1402) of 16S rRNA. This Mesorhizobium japonicum (strain LMG 29417 / CECT 9101 / MAFF 303099) (Mesorhizobium loti (strain MAFF 303099)) protein is Ribosomal RNA small subunit methyltransferase H.